Consider the following 364-residue polypeptide: Melatonin receptor type 1B (364 aa).

The first 28 residues, 1–28 (MPDNSSIANCCAASGLAARPSWPGSAEA), serve as a signal peptide directing secretion. Over 29 to 45 (EPPETPRAPWVAPMLST) the chain is Extracellular. Residues 46-66 (VVIVTTAVDFVGNLLVILSVL) form a helical membrane-spanning segment. At 67–81 (RNRKLRNAGNLFVVN) the chain is on the cytoplasmic side. The helical transmembrane segment at 82 to 102 (LALADLVVALYPYPLILVAIL) threads the bilayer. Topologically, residues 103–115 (HDGWVLGEIHCKA) are extracellular. Residues C113 and C190 are joined by a disulfide bond. Residues 116–136 (SAFVMGLSVIGSVFNITAIAI) traverse the membrane as a helical segment. Topologically, residues 137-158 (NRYWCICHSATYHRACSQWHAP) are cytoplasmic. Residues 159-179 (LYISLIWLLTLVALVPNFFVG) traverse the membrane as a helical segment. Topologically, residues 180-200 (SLEYDPRIYSCTFIQTASTQY) are extracellular. A helical transmembrane segment spans residues 201-221 (TMAVVAIHFLLPIAVVSFCYL). The Cytoplasmic segment spans residues 222–255 (RIWILVLQARRKAKAERKLRLRPSDLRSFLTMFA). The chain crosses the membrane as a helical span at residues 256–276 (VFVVFAICWAPLNCIGLAVAI). The Extracellular portion of the chain corresponds to 277–287 (NPEAMALQIPE). Residues 288–308 (GLFVTSYFLAYFNSCLNAIVY) form a helical membrane-spanning segment. Over 309–364 (GLLNQNFRREYKRILSALWSTGRCFHDASKCHLTEDLQGPVPPAAMATIPVQEGAL) the chain is Cytoplasmic.

This sequence belongs to the G-protein coupled receptor 1 family. In terms of tissue distribution, expressed in the hippocampus, kidney, and ovary.

The protein resides in the cell membrane. Functionally, high affinity receptor for melatonin. The activity of this receptor is mediated by pertussis toxin sensitive G proteins that inhibits adenylate cyclase activity. The polypeptide is Melatonin receptor type 1B (Rattus norvegicus (Rat)).